The following is an 818-amino-acid chain: MEGGEEEVERIPDELFDTKKKHLLDKLIRVGIILVLLIWGTVLLLKSIPHHSNTPDYQEPNSNYTNDGKLKVSFSVVRNNTFQPKYHELQWISDNKIESNDLGLYVTFMNDSYVVKSVYDDSYNSVLLEGKTFIHNGQNLTVESITASPDLKRLLIRTNSVQNWRHSTFGSYFVYDKSSSSFEEIGNEVALAIWSPNSNDIAYVQDNNIYIYSAISKKTIRAVTNDGSSFLFNGKPDWVYEEEVFEDDKAAWWSPTGDYLAFLKIDESEVGEFIIPYYVQDEKDIYPEMRSIKYPKSGTPNPHAELWVYSMKDGTSFHPRISGNKKDGSLLITEVTWVGNGNVLVKTTDRSSDILTVFLIDTIAKTSNVVRNESSNGGWWEITHNTLFIPANETFDRPHNGYVDILPIGGYNHLAYFENSNSSHYKTLTEGKWEVVNGPLAFDSMENRLYFISTRKSSTERHVYYIDLRSPNEIIEVTDTSEDGVYDVSFSSGRRFGLLTYKGPKVPYQKIVDFHSRKAEKCDKGNVLGKSLYHLEKNEVLTKILEDYAVPRKSFRELNLGKDEFGKDILVNSYEILPNDFDETLSDHYPVFFFAYGGPNSQQVVKTFSVGFNEVVASQLNAIVVVVDGRGTGFKGQDFRSLVRDRLGDYEARDQISAASLYGSLTFVDPQKISLFGWSYGGYLTLKTLEKDGGRHFKYGMSVAPVTDWRFYDSVYTERYMHTPQENFDGYVESSVHNVTALAQANRFLLMHGTGDDNVHFQNSLKFLDLLDLNGVENYDVHVFPDSDHSIRYHNANVIVFDKLLDWAKRAFDGQFVK.

Topologically, residues 1-29 (MEGGEEEVERIPDELFDTKKKHLLDKLIR) are cytoplasmic. The helical; Signal-anchor for type II membrane protein transmembrane segment at 30-45 (VGIILVLLIWGTVLLL) threads the bilayer. The Lumenal portion of the chain corresponds to 46–818 (KSIPHHSNTP…KRAFDGQFVK (773 aa)). 7 N-linked (GlcNAc...) asparagine glycosylation sites follow: Asn63, Asn79, Asn110, Asn139, Asn372, Asn392, and Asn421. Ser679 (charge relay system) is an active-site residue. Asn738 carries an N-linked (GlcNAc...) asparagine glycan. Active-site charge relay system residues include Asp756 and His789.

This sequence belongs to the peptidase S9B family.

It localises to the vacuole membrane. In Saccharomyces cerevisiae (strain ATCC 204508 / S288c) (Baker's yeast), this protein is Dipeptidyl aminopeptidase B (DAP2).